Reading from the N-terminus, the 145-residue chain is MSTVYHRPADPSGDDSYVRPLFADRCQAGFPSPATDYAEQELDLNSYCISRPAATFFLRASGESMNQAGVQNGDLLVVDRAEKPQHGDIVIAEIDGEFTVKRLLLRPRPALEPVSDSPEFRTLYPENICIFGVVTHVIHRTRELR.

Catalysis depends on for autocatalytic cleavage activity residues S64 and K101.

Belongs to the peptidase S24 family.

Functionally, involved in UV protection and mutation. The polypeptide is Protein ImpA (Escherichia coli).